The following is a 206-amino-acid chain: Ras-related protein RABG3f (206 aa).

15–23 lines the GTP pocket; that stretch reads GDSGVGKTS. The Effector region signature appears at 37 to 45; that stretch reads YKATIGADF. GTP contacts are provided by residues 63–67, 125–128, and 158–159; these read DTAGQ, NKVD, and SA. S-geranylgeranyl cysteine attachment occurs at residues C204 and C206. Position 206 is a cysteine methyl ester (C206).

This sequence belongs to the small GTPase superfamily. Rab family. In terms of assembly, interacts with VPS35A.

The protein localises to the endosome membrane. The protein resides in the vacuole membrane. It is found in the prevacuolar compartment membrane. Its activity is regulated as follows. Regulated by guanine nucleotide exchange factors (GEFs) which promote the exchange of bound GDP for free GTP. Regulated by the MON1-CCZ1 complex which serves as a link between Rab5 and Rab7 protein families in PVCs and mediates PVC maturation. In terms of biological role, essential for trafficking from prevacuolar compartments to vacuoles. Involved in the trafficking of newly synthesized protein to vacuoles. Essential for plant growth. Participates in the recruitment of the core retromer components to the endosomal membrane by interacting with VPS35A. This chain is Ras-related protein RABG3f (RABG3F), found in Arabidopsis thaliana (Mouse-ear cress).